A 468-amino-acid chain; its full sequence is Probable 1,4-beta-D-glucan cellobiohydrolase C (468 aa).

Residues 1 to 18 (MGRVSSLALALLLPAVQA) form the signal peptide. A CBM1 domain is found at 19–54 (QQTLWGQCGGIGWTGPTNCVAGAACSTQNPYYAQCL). 2 disulfides stabilise this stretch: Cys26–Cys43 and Cys37–Cys53. A thr-rich linker region spans residues 57–106 (TATTSTTLTTTTRVTTTTTSTTSKSSSTGSTTTTKSTGTTTTSGSSTTIT). A disordered region spans residues 68-107 (TRVTTTTTSTTSKSSSTGSTTTTKSTGTTTTSGSSTTITS). A catalytic region spans residues 107-468 (SAPSGNPFSG…QLLKNANPAF (362 aa)). Asp198 is a catalytic residue. 2 disulfides stabilise this stretch: Cys199-Cys258 and Cys390-Cys437. Asp244 functions as the Proton donor in the catalytic mechanism. Asp423 (nucleophile) is an active-site residue.

The protein belongs to the glycosyl hydrolase 6 (cellulase B) family.

Its subcellular location is the secreted. It carries out the reaction Hydrolysis of (1-&gt;4)-beta-D-glucosidic linkages in cellulose and cellotetraose, releasing cellobiose from the non-reducing ends of the chains.. In terms of biological role, the biological conversion of cellulose to glucose generally requires three types of hydrolytic enzymes: (1) Endoglucanases which cut internal beta-1,4-glucosidic bonds; (2) Exocellobiohydrolases that cut the disaccharide cellobiose from the non-reducing end of the cellulose polymer chain; (3) Beta-1,4-glucosidases which hydrolyze the cellobiose and other short cello-oligosaccharides to glucose. The chain is Probable 1,4-beta-D-glucan cellobiohydrolase C (cbhC) from Aspergillus terreus (strain NIH 2624 / FGSC A1156).